A 555-amino-acid chain; its full sequence is Urocanate hydratase (555 aa).

NAD(+)-binding positions include 51-52 (GG), glutamine 129, 175-177 (GMG), glutamate 195, 262-266 (QTSAH), 272-273 (YL), and tyrosine 321. The active site involves cysteine 409. Glycine 491 contacts NAD(+).

Belongs to the urocanase family. Requires NAD(+) as cofactor.

The protein localises to the cytoplasm. It carries out the reaction 4-imidazolone-5-propanoate = trans-urocanate + H2O. It functions in the pathway amino-acid degradation; L-histidine degradation into L-glutamate; N-formimidoyl-L-glutamate from L-histidine: step 2/3. In terms of biological role, catalyzes the conversion of urocanate to 4-imidazolone-5-propionate. The protein is Urocanate hydratase of Xanthomonas axonopodis pv. citri (strain 306).